The chain runs to 754 residues: 5-methyltetrahydropteroyltriglutamate--homocysteine methyltransferase (754 aa).

Residues 17–20 (RELK) and Lys110 each bind 5-methyltetrahydropteroyltri-L-glutamate. Residues 421–423 (IGS) and Glu474 contribute to the L-homocysteine site. L-methionine contacts are provided by residues 421 to 423 (IGS) and Glu474. Residues 505 to 506 (RC) and Trp551 each bind 5-methyltetrahydropteroyltri-L-glutamate. Residue Asp589 coordinates L-homocysteine. Asp589 contacts L-methionine. Position 595 (Glu595) interacts with 5-methyltetrahydropteroyltri-L-glutamate. Zn(2+) is bound by residues His631, Cys633, and Glu655. The active-site Proton donor is the His684. Zn(2+) is bound at residue Cys716.

The protein belongs to the vitamin-B12 independent methionine synthase family. Requires Zn(2+) as cofactor.

It catalyses the reaction 5-methyltetrahydropteroyltri-L-glutamate + L-homocysteine = tetrahydropteroyltri-L-glutamate + L-methionine. It functions in the pathway amino-acid biosynthesis; L-methionine biosynthesis via de novo pathway; L-methionine from L-homocysteine (MetE route): step 1/1. In terms of biological role, catalyzes the transfer of a methyl group from 5-methyltetrahydrofolate to homocysteine resulting in methionine formation. In Synechococcus sp. (strain JA-2-3B'a(2-13)) (Cyanobacteria bacterium Yellowstone B-Prime), this protein is 5-methyltetrahydropteroyltriglutamate--homocysteine methyltransferase.